We begin with the raw amino-acid sequence, 92 residues long: SPbeta prophage-derived uncharacterized protein YoqM (92 aa).

An N-terminal signal peptide occupies residues 1–25 (MKLRKVLTGSVLSLGLLVSASPAFA).

The sequence is that of SPbeta prophage-derived uncharacterized protein YoqM (yoqM) from Bacillus subtilis (strain 168).